The primary structure comprises 165 residues: Endoribonuclease YbeY (165 aa).

Positions 130, 134, and 140 each coordinate Zn(2+).

This sequence belongs to the endoribonuclease YbeY family. Zn(2+) is required as a cofactor.

It localises to the cytoplasm. Single strand-specific metallo-endoribonuclease involved in late-stage 70S ribosome quality control and in maturation of the 3' terminus of the 16S rRNA. This is Endoribonuclease YbeY from Streptococcus suis (strain 98HAH33).